Consider the following 335-residue polypeptide: DNA-directed RNA polymerases I and III subunit RPAC1 (335 aa).

Serine 2 carries the N-acetylserine modification. Serine 17 bears the Phosphoserine mark.

It belongs to the archaeal Rpo3/eukaryotic RPB3 RNA polymerase subunit family. In terms of assembly, component of the RNA polymerase I (Pol I) complex consisting of 14 subunits: RPA135, RPA190, RPC40, RPA14, RPB5, RPO26, RPA43, RPB8, RPA12, RPB10, RPC19, RPC10, RPA49 and RPA34. The complex is composed of a horseshoe-shaped core containing ten subunits (RPA135, RPA190, RPB5, RPO26, RPB8, RPB10, RPC10, RPA12, RPC19 and RPC40) where RPA135 and RPA190 form the DNA-binding cleft. Outside of the core, RPA14 and RPA43 form the stalk that mediates interactions with transcription initiation factors and newly synthesized RNA. Component of the RNA polymerase III (Pol III) complex consisting of at least 17 subunits. Interacts with the RPC19/RPAC2 and RPC53/RPC4. Interacts with retrotransposons Ty integrase, targeting Ty1, Ty2 and Ty4 integration upstream of pol III-transcribed genes.

It localises to the nucleus. The protein localises to the nucleolus. In terms of biological role, DNA-dependent RNA polymerases catalyze the transcription of DNA into RNA using the four ribonucleoside triphosphates as substrates. Common component of RNA polymerases I (Pol I) and III (Pol III) which synthesize ribosomal RNA precursors and small RNAs, such as 5S rRNA and tRNAs, respectively. RPC40 is part of the polymerase core and may function as a clamp element that moves to open and close the cleft. Plays an important role in targeting retrotransposons Ty integration upstream of pol III-transcribed genes such as tRNA genes, allowing Ty1, Ty2 and Ty4 to proliferate and yet minimizing genetic damage. The polypeptide is DNA-directed RNA polymerases I and III subunit RPAC1 (Saccharomyces cerevisiae (strain ATCC 204508 / S288c) (Baker's yeast)).